A 319-amino-acid chain; its full sequence is Lipopolysaccharide heptosyltransferase 1 (319 aa).

ADP-L-glycero-beta-D-manno-heptose contacts are provided by Thr-187, Thr-188, Lys-192, Glu-222, Met-242, Asp-261, Thr-262, Gly-263, and His-266.

The protein belongs to the glycosyltransferase 9 family.

Its subcellular location is the cell inner membrane. It catalyses the reaction an alpha-Kdo-(2-&gt;4)-alpha-Kdo-(2-&gt;6)-lipid A + ADP-L-glycero-beta-D-manno-heptose = an L-alpha-D-Hep-(1-&gt;5)-[alpha-Kdo-(2-&gt;4)]-alpha-Kdo-(2-&gt;6)-lipid A + ADP + H(+). The enzyme catalyses alpha-Kdo-(2-&gt;4)-alpha-Kdo-(2-&gt;6)-lipid A (E. coli) + ADP-L-glycero-beta-D-manno-heptose = L-alpha-D-Hep-(1-&gt;5)-[alpha-Kdo-(2-&gt;4)]-alpha-Kdo-(2-&gt;6)-lipid A (E. coli) + ADP + H(+). The protein operates within bacterial outer membrane biogenesis; LPS core biosynthesis. Its function is as follows. Glycosyltransferase involved in the biosynthesis of the core oligosaccharide region of lipopolysaccharide (LPS). Catalyzes the addition of the first heptose unit to one 3-deoxy-D-manno-octulosonic acid (Kdo) residue of the Kdo2-lipid A module. The analog ADP-mannose can serve as an alternative donor in place of ADP-L-glycero-D-manno-heptose for the glycosylation of Kdo2-lipid A. Displays no activity with ADP-glucose, GDP-mannose, UDP-glucose or UDP-galactose. The sequence is that of Lipopolysaccharide heptosyltransferase 1 from Escherichia coli (strain K12).